The primary structure comprises 86 residues: MSDDITSEAQTIAVGQLRAFIERIERLEEEKKTIGDDIKEVYAELKSSGFDSKVVRTIIRLRKKEDHERQEEEAMLQLYMDALGMS.

Belongs to the UPF0335 family.

The protein is UPF0335 protein BR1752/BS1330_I1746 of Brucella suis biovar 1 (strain 1330).